A 172-amino-acid polypeptide reads, in one-letter code: Bcl-2-related protein A1 (172 aa).

The BH1 signature appears at lysine 77–glycine 97. The BH2 signature appears at glutamate 132 to lysine 147.

It belongs to the Bcl-2 family. Interacts directly with BCL2L11/BIM and PMAIP1. Interacts directly with BAK1, BID, BMF and BBC3. Interacts with BOP. Interacts with isoform 3, isoform 4 and isoform 5 of ING4. Interacts with UBQLN4. Expressed in hemopoietic tissues, including bone marrow, spleen and thymus.

The protein resides in the cytoplasm. Functionally, retards apoptosis induced by IL-3 deprivation. May function in the response of hemopoietic cells to external signals and in maintaining endothelial survival during infection. Can inhibit apoptosis induced by serum starvation in the mammary epithelial cell line HC11. This Mus musculus (Mouse) protein is Bcl-2-related protein A1 (Bcl2a1).